The primary structure comprises 506 residues: D-alanine--D-alanyl carrier protein ligase (506 aa).

Position 152 to 153 (152 to 153) interacts with ATP; that stretch reads TS. Position 197 (Asp197) interacts with D-alanine. 292–297 contributes to the ATP binding site; it reads NTYGPT. Val301 serves as a coordination point for D-alanine. ATP is bound by residues Asp383, 395–398, and Lys494; that span reads YRGR. Lys494 is a D-alanine binding site.

Belongs to the ATP-dependent AMP-binding enzyme family. DltA subfamily.

It localises to the cytoplasm. It catalyses the reaction holo-[D-alanyl-carrier protein] + D-alanine + ATP = D-alanyl-[D-alanyl-carrier protein] + AMP + diphosphate. The protein operates within cell wall biogenesis; lipoteichoic acid biosynthesis. Its function is as follows. Catalyzes the first step in the D-alanylation of lipoteichoic acid (LTA), the activation of D-alanine and its transfer onto the D-alanyl carrier protein (Dcp) DltC. In an ATP-dependent two-step reaction, forms a high energy D-alanyl-AMP intermediate, followed by transfer of the D-alanyl residue as a thiol ester to the phosphopantheinyl prosthetic group of the Dcp. D-alanylation of LTA plays an important role in modulating the properties of the cell wall in Gram-positive bacteria, influencing the net charge of the cell wall. In Lacticaseibacillus paracasei (strain ATCC 334 / BCRC 17002 / CCUG 31169 / CIP 107868 / KCTC 3260 / NRRL B-441) (Lactobacillus paracasei), this protein is D-alanine--D-alanyl carrier protein ligase.